Consider the following 347-residue polypeptide: NADH-ubiquinone oxidoreductase chain 2 (347 aa).

Transmembrane regions (helical) follow at residues 1-21, 25-45, 59-79, 96-116, 122-142, 149-169, 200-220, 239-259, 274-294, and 325-345; these read MNPSIFIILLTTLILGTMMVI, HWLLAWIGFEMNMMAFIPIMM, YLLTQATASALLMMAVIINLM, TLMTVALAIKLGLAPFHFWVP, IPLTTGLILLTWQKLAPLSIL, INLYLMLTMSLLSILVGGWGG, LTLLNLLIYITMTFTMFMLFI, IITTLTMLTLLSMGGLPPLSG, DILIMPTFMAITALLNLYFYM, and LLPTAIVISTMLLPLTPMLSI.

The protein belongs to the complex I subunit 2 family. In terms of assembly, core subunit of respiratory chain NADH dehydrogenase (Complex I) which is composed of 45 different subunits. Interacts with TMEM242.

The protein resides in the mitochondrion inner membrane. The enzyme catalyses a ubiquinone + NADH + 5 H(+)(in) = a ubiquinol + NAD(+) + 4 H(+)(out). Core subunit of the mitochondrial membrane respiratory chain NADH dehydrogenase (Complex I) which catalyzes electron transfer from NADH through the respiratory chain, using ubiquinone as an electron acceptor. Essential for the catalytic activity and assembly of complex I. The protein is NADH-ubiquinone oxidoreductase chain 2 of Balaenoptera musculus (Blue whale).